Here is a 28-residue protein sequence, read N- to C-terminus: uncharacterized protein (28 aa).

Residues 1–18 show a composition bias toward basic residues; the sequence is MLPRKYKPAYKKQAHRVK. A disordered region spans residues 1–28; sequence MLPRKYKPAYKKQAHRVKSNPQPAYTFQ. Over residues 19–28 the composition is skewed to polar residues; it reads SNPQPAYTFQ.

This is an uncharacterized protein from Saccharomyces cerevisiae (strain ATCC 204508 / S288c) (Baker's yeast).